Consider the following 381-residue polypeptide: Probable cyclic AMP-AMP-GMP nucleotide synthase (381 aa).

2 residues coordinate GTP: Ser53 and Arg56. Residues Asp69 and Asp71 contribute to the active site. Mg(2+) contacts are provided by Asp69 and Asp71. Arg109 serves as a coordination point for GTP. Asp121 is a catalytic residue. Mg(2+)-binding residues include Asp121 and Asp196. Residues Arg197, Arg204, Thr205, Gln210, and Arg307 each contribute to the GTP site. Residues 348 to 381 form a disordered region; sequence GTKFPFPGPQGGDRSGGFTAPTQPAEPQKTGRFA.

It belongs to the CD-NTase family. D02 subfamily. Mg(2+) is required as a cofactor.

It catalyses the reaction GTP + 2 ATP = 3',3',3'-cAAG + 3 diphosphate. Functionally, cyclic nucleotide synthase (second messenger synthase) of a CBASS antivirus system. CBASS (cyclic oligonucleotide-based antiphage signaling system) provides immunity against bacteriophage. The CD-NTase protein synthesizes cyclic nucleotides in response to infection; these serve as specific second messenger signals. The signals activate a diverse range of effectors, leading to bacterial cell death and thus abortive phage infection. Cyclic nucleotide synthase, synthesizes a tricyclic nucleotide with AMP and GMP moieties, probably 3',3',3'-cyclic AMP-AMP-GMP (3'3'3'-cAAG). Controls the activity of the associated CBASS effector protein. This chain is Probable cyclic AMP-AMP-GMP nucleotide synthase, found in Salmonella paratyphi B (Salmonella enterica subsp. enterica serovar Paratyphi B).